A 243-amino-acid polypeptide reads, in one-letter code: uncharacterized protein (243 aa).

Positions 1-19 are cleaved as a signal peptide; sequence MKSLPLLGILAFAANRLSA. Asn112 and Asn206 each carry an N-linked (GlcNAc...) asparagine glycan.

This is an uncharacterized protein from Encephalitozoon cuniculi (strain GB-M1) (Microsporidian parasite).